The following is a 380-amino-acid chain: Cystathionine beta-lyase (380 aa).

Lys-196 carries the post-translational modification N6-(pyridoxal phosphate)lysine.

The protein belongs to the trans-sulfuration enzymes family. It depends on pyridoxal 5'-phosphate as a cofactor.

The protein resides in the cytoplasm. It catalyses the reaction L,L-cystathionine + H2O = L-homocysteine + pyruvate + NH4(+). It carries out the reaction an S-substituted L-cysteine + H2O = a thiol + pyruvate + NH4(+). The protein operates within amino-acid biosynthesis; L-methionine biosynthesis via de novo pathway; L-homocysteine from L-cystathionine: step 1/1. Its function is as follows. The enzymatic degradation of amino acids in cheese is believed to generate aroma compounds and therefore to be essential for flavor development. Cystathionine beta-lyase (CBL) can convert cystathionine to homocysteine but is also able to catalyze an alpha, gamma elimination. With methionine as a substrate, it produces volatile sulfur compounds which are important for flavor formation in Gouda cheese. In Lactococcus lactis subsp. cremoris (Streptococcus cremoris), this protein is Cystathionine beta-lyase (metC).